The sequence spans 431 residues: MAQKIQSVKGMNDLLPVEQKDFKLTAAFWQAFEDTVNRWTRAYGYRQIRTPIVEQTGLFVRSIGEETDVVGKEMYTFSDSNDSLSLSLRPEGTASCLRAVVEHNLLYNSPQKLWYMGPMFRRERPQKGRYRQFHQVGIEALGFEGPDIDAEIIAMSADLWEKLGIREYLTLEINSLGNREERAAHRAALVEYLTRYEDKLDEDSKRRLKTNPLRVLDTKNPDLQEICNAAPRLVDYLGEASQNHYARFKAMLDGLGIQYIENPRLVRGLDYYNQTVFEWTTDKLGAQATVCGGGRYDGLIEELGGKPAPSIGFAMGIERLLLLVSEYGSLEVNAAPDVYAMHQGERADLQVMKYAQALRTQGFNVMQHSGYQSLKAQMKKADNSGARFALIVAQDELANGTVTLKDMNGAHGQQTVAAEDLTHTLQQWKNA.

It belongs to the class-II aminoacyl-tRNA synthetase family. As to quaternary structure, homodimer.

The protein localises to the cytoplasm. The catalysed reaction is tRNA(His) + L-histidine + ATP = L-histidyl-tRNA(His) + AMP + diphosphate + H(+). This chain is Histidine--tRNA ligase, found in Neisseria meningitidis serogroup C / serotype 2a (strain ATCC 700532 / DSM 15464 / FAM18).